The chain runs to 280 residues: DNA repair protein XRCC2 (280 aa).

Position 10 is a phosphoserine (Ser10).

It belongs to the RecA family. RAD51 subfamily. Interacts with RAD51D. Part of the BCDX2 complex consisting of RAD51B, RAD51C, RAD51D and XRCC2; the complex has a ring-like structure arranged into a flat disk around a central channel. In the absence of DNA, the BCDX2 subcomplex XRCC2:RAD51D formed a multimeric ring structure; in the presence of single-stranded DNA it formed a filamentous structure with the ssDNA.

It is found in the nucleus. It localises to the cytoplasm. The protein localises to the cytoskeleton. Its subcellular location is the microtubule organizing center. The protein resides in the centrosome. In terms of biological role, involved in the homologous recombination repair (HRR) pathway of double-stranded DNA, thought to repair chromosomal fragmentation, translocations and deletions. Part of the RAD51 paralog protein complex BCDX2 which acts in the BRCA1-BRCA2-dependent HR pathway. Upon DNA damage, BCDX2 acts downstream of BRCA2 recruitment and upstream of RAD51 recruitment. BCDX2 binds predominantly to the intersection of the four duplex arms of the Holliday junction and to junction of replication forks. The BCDX2 complex was originally reported to bind single-stranded DNA, single-stranded gaps in duplex DNA and specifically to nicks in duplex DNA. The protein is DNA repair protein XRCC2 (XRCC2) of Homo sapiens (Human).